Here is a 319-residue protein sequence, read N- to C-terminus: Putative binding protein BAB2_1146 (319 aa).

The first 22 residues, 1–22 (MKRRTFLAMSLALTFLPSVALA), serve as a signal peptide directing secretion.

This sequence belongs to the bacterial solute-binding protein SsuA/TauA family. The complex is composed of two ATP-binding proteins (BAB2_1147), two transmembrane proteins (BAB2_1148) and a solute-binding protein (BAB2_1146).

The protein localises to the periplasm. Functionally, probably part of an ABC transporter complex. This is Putative binding protein BAB2_1146 from Brucella abortus (strain 2308).